The chain runs to 359 residues: Adenosine deaminase (359 aa).

Residues His15 and His17 each coordinate Zn(2+). Substrate contacts are provided by His17, Asp19, and Gly184. His213 is a binding site for Zn(2+). Glu216 functions as the Proton donor in the catalytic mechanism. Zn(2+) is bound at residue Asp295. Asp296 provides a ligand contact to substrate.

This sequence belongs to the metallo-dependent hydrolases superfamily. Adenosine and AMP deaminases family. It depends on Zn(2+) as a cofactor.

It is found in the cell membrane. It localises to the cell junction. The protein resides in the cytoplasmic vesicle lumen. The protein localises to the cytoplasm. Its subcellular location is the lysosome. The catalysed reaction is adenosine + H2O + H(+) = inosine + NH4(+). It catalyses the reaction 2'-deoxyadenosine + H2O + H(+) = 2'-deoxyinosine + NH4(+). Functionally, catalyzes the hydrolytic deamination of adenosine and 2-deoxyadenosine. Plays an important role in purine metabolism and in adenosine homeostasis. Modulates signaling by extracellular adenosine, and so contributes indirectly to cellular signaling events. May act as a positive regulator of T-cell coactivation. The protein is Adenosine deaminase (ada) of Danio rerio (Zebrafish).